Here is a 545-residue protein sequence, read N- to C-terminus: Glucose-6-phosphate isomerase (545 aa).

The active-site Proton donor is Glu-351. Catalysis depends on residues His-382 and Lys-510.

Belongs to the GPI family.

It is found in the cytoplasm. The catalysed reaction is alpha-D-glucose 6-phosphate = beta-D-fructose 6-phosphate. The protein operates within carbohydrate biosynthesis; gluconeogenesis. It functions in the pathway carbohydrate degradation; glycolysis; D-glyceraldehyde 3-phosphate and glycerone phosphate from D-glucose: step 2/4. Functionally, catalyzes the reversible isomerization of glucose-6-phosphate to fructose-6-phosphate. This chain is Glucose-6-phosphate isomerase, found in Shewanella putrefaciens (strain CN-32 / ATCC BAA-453).